Consider the following 597-residue polypeptide: Lipoprotein LpqB (597 aa).

Residues methionine 1–glycine 28 form the signal peptide. Cysteine 29 carries N-palmitoyl cysteine lipidation. A lipid anchor (S-diacylglycerol cysteine) is attached at cysteine 29. The span at proline 38–serine 51 shows a compositional bias: polar residues. Residues proline 38–proline 58 are disordered.

This sequence belongs to the LpqB lipoprotein family.

The protein localises to the cell membrane. The sequence is that of Lipoprotein LpqB from Rhodococcus jostii (strain RHA1).